Here is a 210-residue protein sequence, read N- to C-terminus: MPPELTPTRRSILQATLRLGAGATAGQVAQEVGITKQAISQQVNILRKLGYLQPAETRYGPLQVTDRARAALGEGLPIYGQIAAGIPALAEQSPEDFTPSIEALLGLKAGDFLLRVRGESMTGIGVMDGDYVVVRPAPEVHDGEVAVVLVPGDNAATLKRLYHFGQDILLTSENPAMPRLSFPAEQVQVQGRMVGRVGVGAPRVSHRVTE.

Residues 25-44 (AGQVAQEVGITKQAISQQVN) constitute a DNA-binding region (H-T-H motif). Active-site for autocatalytic cleavage activity residues include S120 and K159.

This sequence belongs to the peptidase S24 family. Homodimer.

The catalysed reaction is Hydrolysis of Ala-|-Gly bond in repressor LexA.. In terms of biological role, represses a number of genes involved in the response to DNA damage (SOS response), including recA and lexA. In the presence of single-stranded DNA, RecA interacts with LexA causing an autocatalytic cleavage which disrupts the DNA-binding part of LexA, leading to derepression of the SOS regulon and eventually DNA repair. The chain is LexA repressor from Deinococcus radiodurans (strain ATCC 13939 / DSM 20539 / JCM 16871 / CCUG 27074 / LMG 4051 / NBRC 15346 / NCIMB 9279 / VKM B-1422 / R1).